An 807-amino-acid polypeptide reads, in one-letter code: Glycerol-3-phosphate acyltransferase (807 aa).

An HXXXXD motif motif is present at residues 308-313 (CHRSHM).

Belongs to the GPAT/DAPAT family.

The protein localises to the cell inner membrane. The enzyme catalyses sn-glycerol 3-phosphate + an acyl-CoA = a 1-acyl-sn-glycero-3-phosphate + CoA. Its pathway is phospholipid metabolism; CDP-diacylglycerol biosynthesis; CDP-diacylglycerol from sn-glycerol 3-phosphate: step 1/3. The protein is Glycerol-3-phosphate acyltransferase of Shewanella loihica (strain ATCC BAA-1088 / PV-4).